A 191-amino-acid polypeptide reads, in one-letter code: Protein Ves (191 aa).

Belongs to the Ves family.

This is Protein Ves from Escherichia coli (strain SE11).